Here is a 99-residue protein sequence, read N- to C-terminus: NADH-quinone oxidoreductase subunit K (99 aa).

3 consecutive transmembrane segments (helical) span residues 3 to 23 (PDNY…GVLL), 28 to 48 (IVVF…FVAF), and 59 to 79 (VVAF…LAII).

The protein belongs to the complex I subunit 4L family. As to quaternary structure, NDH-1 is composed of 14 different subunits. Subunits NuoA, H, J, K, L, M, N constitute the membrane sector of the complex.

It is found in the cell membrane. The enzyme catalyses a quinone + NADH + 5 H(+)(in) = a quinol + NAD(+) + 4 H(+)(out). Its function is as follows. NDH-1 shuttles electrons from NADH, via FMN and iron-sulfur (Fe-S) centers, to quinones in the respiratory chain. The immediate electron acceptor for the enzyme in this species is believed to be a menaquinone. Couples the redox reaction to proton translocation (for every two electrons transferred, four hydrogen ions are translocated across the cytoplasmic membrane), and thus conserves the redox energy in a proton gradient. This chain is NADH-quinone oxidoreductase subunit K, found in Mycobacterium sp. (strain JLS).